The following is an 835-amino-acid chain: Peptide transporter family 1 (835 aa).

Transmembrane regions (helical) follow at residues Ile86–Ala106, Phe113–Ala133, Gly150–Gly170, Leu183–Ser203, Phe222–Trp242, Met325–Ile345, Leu368–Ala388, Val401–Val421, Ile697–Thr717, Trp738–Phe758, and Phe765–Phe785. Residues Pro814–Phe835 form a disordered region. A compositionally biased stretch (basic and acidic residues) spans Lys821 to Phe835.

It belongs to the major facilitator superfamily. Proton-dependent oligopeptide transporter (POT/PTR) (TC 2.A.17) family. In terms of tissue distribution, expressed specifically in the intestine.

The protein resides in the apical cell membrane. Low-affinity peptide transporter that is necessary for proton-dependent uptake of di- or tripeptides, and to a minor extent tetrapeptides, in the intestine. Transport is independent of sodium and chloride ions. Controls the uptake of dietary fatty acids, plays a role in fatty acid synthesis and is responsible for dipeptide-induced acidification of the intestine. Regulates cellular pH differences together with the antiporter protein, nhx-2. Amino acid uptake and absorption levels influence the insulin signaling/daf-2 and let-363/TOR pathways, subsequently affecting the stress response and longevity of the organism. It is required for the uptake of the L-enantiomers of various amino acids, including L-glutamate. In response to the availability of amino acid nutrients, may play a role in promoting reproduction and fertility. The protein is Peptide transporter family 1 of Caenorhabditis elegans.